The following is a 347-amino-acid chain: GMP reductase (347 aa).

108–131 (ADFEKTKQILDLNPALNFVCIDVA) lines the NADP(+) pocket. 2 residues coordinate K(+): glycine 181 and glycine 183. Cysteine 186 functions as the Thioimidate intermediate in the catalytic mechanism. NADP(+) is bound at residue 216-239 (IISDGGCTTPGDVAKAFGGGADFV).

It belongs to the IMPDH/GMPR family. GuaC type 1 subfamily. In terms of assembly, homotetramer.

The enzyme catalyses IMP + NH4(+) + NADP(+) = GMP + NADPH + 2 H(+). Its function is as follows. Catalyzes the irreversible NADPH-dependent deamination of GMP to IMP. It functions in the conversion of nucleobase, nucleoside and nucleotide derivatives of G to A nucleotides, and in maintaining the intracellular balance of A and G nucleotides. In Escherichia coli O157:H7, this protein is GMP reductase.